The following is a 148-amino-acid chain: Probable DNA-directed RNA polymerases I, II, and III subunit RPABC3 (148 aa).

The tract at residues Asp16–Ile40 is non-specific ssDNA binding.

The protein belongs to the eukaryotic RPB8 RNA polymerase subunit family. In terms of assembly, component of the RNA polymerase I (Pol I), RNA polymerase II (Pol II) and RNA polymerase III (Pol III) complexes consisting of at least 13, 12 and 17 subunits, respectively. Directly interacts with POLR2A.

Its subcellular location is the nucleus. DNA-dependent RNA polymerase catalyzes the transcription of DNA into RNA using the four ribonucleoside triphosphates as substrates. Common component of RNA polymerases I, II and III which synthesize ribosomal RNA precursors, mRNA precursors and many functional non-coding RNAs, and small RNAs, such as 5S rRNA and tRNAs, respectively. In Caenorhabditis briggsae, this protein is Probable DNA-directed RNA polymerases I, II, and III subunit RPABC3.